We begin with the raw amino-acid sequence, 476 residues long: Aspartyl/glutamyl-tRNA(Asn/Gln) amidotransferase subunit B (476 aa).

Belongs to the GatB/GatE family. GatB subfamily. As to quaternary structure, heterotrimer of A, B and C subunits.

The enzyme catalyses L-glutamyl-tRNA(Gln) + L-glutamine + ATP + H2O = L-glutaminyl-tRNA(Gln) + L-glutamate + ADP + phosphate + H(+). It carries out the reaction L-aspartyl-tRNA(Asn) + L-glutamine + ATP + H2O = L-asparaginyl-tRNA(Asn) + L-glutamate + ADP + phosphate + 2 H(+). In terms of biological role, allows the formation of correctly charged Asn-tRNA(Asn) or Gln-tRNA(Gln) through the transamidation of misacylated Asp-tRNA(Asn) or Glu-tRNA(Gln) in organisms which lack either or both of asparaginyl-tRNA or glutaminyl-tRNA synthetases. The reaction takes place in the presence of glutamine and ATP through an activated phospho-Asp-tRNA(Asn) or phospho-Glu-tRNA(Gln). This chain is Aspartyl/glutamyl-tRNA(Asn/Gln) amidotransferase subunit B, found in Shouchella clausii (strain KSM-K16) (Alkalihalobacillus clausii).